Here is a 950-residue protein sequence, read N- to C-terminus: Leucine--tRNA ligase (950 aa).

A 'HIGH' region motif is present at residues 41 to 52 (PYPSGDGLHVGH). The 'KMSKS' region signature appears at 718–722 (KMSKS). Lys721 serves as a coordination point for ATP.

Belongs to the class-I aminoacyl-tRNA synthetase family.

It is found in the cytoplasm. The catalysed reaction is tRNA(Leu) + L-leucine + ATP = L-leucyl-tRNA(Leu) + AMP + diphosphate. The protein is Leucine--tRNA ligase of Rhodopirellula baltica (strain DSM 10527 / NCIMB 13988 / SH1).